The sequence spans 132 residues: Transcription antitermination protein NusB (132 aa).

This sequence belongs to the NusB family.

Its function is as follows. Involved in transcription antitermination. Required for transcription of ribosomal RNA (rRNA) genes. Binds specifically to the boxA antiterminator sequence of the ribosomal RNA (rrn) operons. This chain is Transcription antitermination protein NusB, found in Campylobacter lari (strain RM2100 / D67 / ATCC BAA-1060).